A 670-amino-acid chain; its full sequence is DNA ligase (670 aa).

Residues 32 to 36 (DAEYD), 81 to 82 (SL), and Glu-113 each bind NAD(+). Residue Lys-115 is the N6-AMP-lysine intermediate of the active site. Residues Arg-136, Glu-173, Lys-290, and Lys-314 each contribute to the NAD(+) site. Zn(2+)-binding residues include Cys-408, Cys-411, Cys-426, and Cys-432. Positions 592-670 (EIDSPFAGKT…EAEMIRLLGE (79 aa)) constitute a BRCT domain.

This sequence belongs to the NAD-dependent DNA ligase family. LigA subfamily. The cofactor is Mg(2+). Requires Mn(2+) as cofactor.

It carries out the reaction NAD(+) + (deoxyribonucleotide)n-3'-hydroxyl + 5'-phospho-(deoxyribonucleotide)m = (deoxyribonucleotide)n+m + AMP + beta-nicotinamide D-nucleotide.. In terms of biological role, DNA ligase that catalyzes the formation of phosphodiester linkages between 5'-phosphoryl and 3'-hydroxyl groups in double-stranded DNA using NAD as a coenzyme and as the energy source for the reaction. It is essential for DNA replication and repair of damaged DNA. The protein is DNA ligase of Yersinia pseudotuberculosis serotype O:1b (strain IP 31758).